Here is a 616-residue protein sequence, read N- to C-terminus: Proline--tRNA ligase (616 aa).

Belongs to the class-II aminoacyl-tRNA synthetase family. ProS type 1 subfamily. Homodimer.

It is found in the cytoplasm. The catalysed reaction is tRNA(Pro) + L-proline + ATP = L-prolyl-tRNA(Pro) + AMP + diphosphate. Functionally, catalyzes the attachment of proline to tRNA(Pro) in a two-step reaction: proline is first activated by ATP to form Pro-AMP and then transferred to the acceptor end of tRNA(Pro). As ProRS can inadvertently accommodate and process non-cognate amino acids such as alanine and cysteine, to avoid such errors it has two additional distinct editing activities against alanine. One activity is designated as 'pretransfer' editing and involves the tRNA(Pro)-independent hydrolysis of activated Ala-AMP. The other activity is designated 'posttransfer' editing and involves deacylation of mischarged Ala-tRNA(Pro). The misacylated Cys-tRNA(Pro) is not edited by ProRS. This Streptococcus sanguinis (strain SK36) protein is Proline--tRNA ligase.